Here is a 495-residue protein sequence, read N- to C-terminus: Alkaline protease 2 (495 aa).

The first 16 residues, 1–16 (MKGYLSLSILPLLVAA), serve as a signal peptide directing secretion. Residues 17–136 (SPVVVDSIHN…IEKDSEVHTM (120 aa)) constitute a propeptide that is removed on maturation. The Inhibitor I9 domain maps to 43–136 (SYIVVFKKHV…IEKDSEVHTM (94 aa)). The region spanning 146-452 (PWGLARISHR…GGSSNYTDII (307 aa)) is the Peptidase S8 domain. Active-site charge relay system residues include aspartate 182 and histidine 214. Asparagine 284 carries an N-linked (GlcNAc...) asparagine glycan. Serine 380 functions as the Charge relay system in the catalytic mechanism. Residues asparagine 447 and asparagine 460 are each glycosylated (N-linked (GlcNAc...) asparagine).

The protein belongs to the peptidase S8 family.

The enzyme catalyses Hydrolysis of proteins with broad specificity, and of Bz-Arg-OEt &gt; Ac-Tyr-OEt. Does not hydrolyze peptide amides.. Alkaline protease that allows assimilation of proteinaceous substrates. Acts as a significant virulence factor in invasive aspergillosis. Required for regular sporulation. The protein is Alkaline protease 2 (alp2) of Aspergillus fumigatus (strain CBS 144.89 / FGSC A1163 / CEA10) (Neosartorya fumigata).